Reading from the N-terminus, the 356-residue chain is WAT1-related protein At1g68170 (356 aa).

Transmembrane regions (helical) follow at residues 4–24 (ITAM…FKLA), 33–53 (VLVA…CFIF), 65–85 (LMLL…ILTI), 94–114 (TFTS…AALL), 125–145 (VGLA…VFIF), 176–196 (ISIL…LWFL), 210–230 (WNAT…ALCW), 245–265 (LLTI…VNAW), 273–293 (LFVS…GSFL), and 298–318 (LHLG…IVLW). 2 consecutive EamA domains span residues 14-142 (TAGL…GALV) and 191-317 (ISLW…YIVL).

Belongs to the drug/metabolite transporter (DMT) superfamily. Plant drug/metabolite exporter (P-DME) (TC 2.A.7.4) family.

It localises to the membrane. This chain is WAT1-related protein At1g68170, found in Arabidopsis thaliana (Mouse-ear cress).